Reading from the N-terminus, the 448-residue chain is MRAIIIGSGAAGLTTASTIRKYNKDMEIVVITKEKEIAYSPCAIPYVIEGAIKSFDDIIMHTPEDYKRERNIDILTETTVIDVDSKNNKIKCVDKDGNEFEMNYDYLVLATGAEPFIPPIEGKDLDGVFKVRTIEDGRAILKYIEENGCKKVAVVGAGAIGLEMAYGLKCRGLDVLVVEMAPQVLPRFLDPDMAEIVQKYLEKEGIKVMLSKPLEKIVGKEKVEAVYVDGKLYDVDMVIMATGVRPNIELAKKAGCKIGKFAIEVNEKMQTSIPNIYAVGDCVEVIDFITGEKTLSPFGTAAVRQGKVAGKNIAGVEAKFYPVLNSAVSKIGDLEIGGTGLTAFSANLKRIPIVIGRAKALTRARYYPGGKEIEIKMIFNEDGKVVGCQIVGGERVAERIDAMSIAIFKKVSAEELANMEFCYAPPVSMVHEPLSLAAEDALKKLSNK.

Residues 7 to 11, Cys-42, Val-80, 110 to 113, and Arg-132 contribute to the FAD site; these read GSGAA and ATGA. The active-site Redox-active is Cys-42. NAD(+) contacts are provided by residues 152 to 167, Glu-179, and Gly-243; that span reads VAVV…MAYG. FAD is bound by residues 271-281, Gly-299, and Thr-300; that span reads TSIPNIYAVGD. Val-328 contributes to the NAD(+) binding site. Tyr-423 serves as a coordination point for FAD.

The protein belongs to the class-III pyridine nucleotide-disulfide oxidoreductase family. FAD is required as a cofactor.

It carries out the reaction 2 NADH + O2 + 2 H(+) = 2 NAD(+) + 2 H2O. Its function is as follows. Catalyzes the four-electron reduction of molecular oxygen to water. The sequence is that of NADH oxidase from Methanocaldococcus jannaschii (strain ATCC 43067 / DSM 2661 / JAL-1 / JCM 10045 / NBRC 100440) (Methanococcus jannaschii).